The following is a 149-amino-acid chain: UPF0178 protein Mmwyl1_2258 (149 aa).

Belongs to the UPF0178 family.

The protein is UPF0178 protein Mmwyl1_2258 of Marinomonas sp. (strain MWYL1).